A 340-amino-acid chain; its full sequence is DNA-directed RNA polymerase subunit alpha (340 aa).

Residues 1–237 (MSSDELVYMN…EQMNPFINFD (237 aa)) are alpha N-terminal domain (alpha-NTD). An alpha C-terminal domain (alpha-CTD) region spans residues 256 to 340 (FNENLYRSVD…PEEDQIKEGE (85 aa)).

This sequence belongs to the RNA polymerase alpha chain family. Homodimer. The RNAP catalytic core consists of 2 alpha, 1 beta, 1 beta' and 1 omega subunit. When a sigma factor is associated with the core the holoenzyme is formed, which can initiate transcription.

It carries out the reaction RNA(n) + a ribonucleoside 5'-triphosphate = RNA(n+1) + diphosphate. DNA-dependent RNA polymerase catalyzes the transcription of DNA into RNA using the four ribonucleoside triphosphates as substrates. In Desulforapulum autotrophicum (strain ATCC 43914 / DSM 3382 / VKM B-1955 / HRM2) (Desulfobacterium autotrophicum), this protein is DNA-directed RNA polymerase subunit alpha.